The sequence spans 227 residues: Phosphoribosylformylglycinamidine synthase subunit PurQ (227 aa).

In terms of domain architecture, Glutamine amidotransferase type-1 spans 3–227 (FAVCVFPGSN…LMLWYSLLSD (225 aa)). The active-site Nucleophile is Cys86. Residues His203 and Glu205 contribute to the active site.

As to quaternary structure, part of the FGAM synthase complex composed of 1 PurL, 1 PurQ and 2 PurS subunits.

The protein localises to the cytoplasm. It catalyses the reaction N(2)-formyl-N(1)-(5-phospho-beta-D-ribosyl)glycinamide + L-glutamine + ATP + H2O = 2-formamido-N(1)-(5-O-phospho-beta-D-ribosyl)acetamidine + L-glutamate + ADP + phosphate + H(+). The enzyme catalyses L-glutamine + H2O = L-glutamate + NH4(+). It functions in the pathway purine metabolism; IMP biosynthesis via de novo pathway; 5-amino-1-(5-phospho-D-ribosyl)imidazole from N(2)-formyl-N(1)-(5-phospho-D-ribosyl)glycinamide: step 1/2. In terms of biological role, part of the phosphoribosylformylglycinamidine synthase complex involved in the purines biosynthetic pathway. Catalyzes the ATP-dependent conversion of formylglycinamide ribonucleotide (FGAR) and glutamine to yield formylglycinamidine ribonucleotide (FGAM) and glutamate. The FGAM synthase complex is composed of three subunits. PurQ produces an ammonia molecule by converting glutamine to glutamate. PurL transfers the ammonia molecule to FGAR to form FGAM in an ATP-dependent manner. PurS interacts with PurQ and PurL and is thought to assist in the transfer of the ammonia molecule from PurQ to PurL. The sequence is that of Phosphoribosylformylglycinamidine synthase subunit PurQ from Aquifex aeolicus (strain VF5).